The primary structure comprises 498 residues: ATP synthase subunit beta, chloroplastic (498 aa).

T6 carries the post-translational modification Phosphothreonine. S13 is subject to Phosphoserine. Residue 172–179 (GGAGVGKT) participates in ATP binding.

The protein belongs to the ATPase alpha/beta chains family. In terms of assembly, F-type ATPases have 2 components, CF(1) - the catalytic core - and CF(0) - the membrane proton channel. CF(1) has five subunits: alpha(3), beta(3), gamma(1), delta(1), epsilon(1). CF(0) has four main subunits: a(1), b(1), b'(1) and c(9-12).

It localises to the plastid. Its subcellular location is the chloroplast thylakoid membrane. It carries out the reaction ATP + H2O + 4 H(+)(in) = ADP + phosphate + 5 H(+)(out). Produces ATP from ADP in the presence of a proton gradient across the membrane. The catalytic sites are hosted primarily by the beta subunits. The polypeptide is ATP synthase subunit beta, chloroplastic (Barbarea verna (Land cress)).